The following is a 281-amino-acid chain: Bifunctional protein FolD (281 aa).

NADP(+)-binding positions include 165-167, Thr-192, and Val-233; that span reads GRG.

It belongs to the tetrahydrofolate dehydrogenase/cyclohydrolase family. Homodimer.

The enzyme catalyses (6R)-5,10-methylene-5,6,7,8-tetrahydrofolate + NADP(+) = (6R)-5,10-methenyltetrahydrofolate + NADPH. It catalyses the reaction (6R)-5,10-methenyltetrahydrofolate + H2O = (6R)-10-formyltetrahydrofolate + H(+). Its pathway is one-carbon metabolism; tetrahydrofolate interconversion. Catalyzes the oxidation of 5,10-methylenetetrahydrofolate to 5,10-methenyltetrahydrofolate and then the hydrolysis of 5,10-methenyltetrahydrofolate to 10-formyltetrahydrofolate. This Mycobacteroides abscessus (strain ATCC 19977 / DSM 44196 / CCUG 20993 / CIP 104536 / JCM 13569 / NCTC 13031 / TMC 1543 / L948) (Mycobacterium abscessus) protein is Bifunctional protein FolD.